The chain runs to 101 residues: Small ribosomal subunit protein uS10 (101 aa).

It belongs to the universal ribosomal protein uS10 family. In terms of assembly, part of the 30S ribosomal subunit.

Involved in the binding of tRNA to the ribosomes. This Corynebacterium aurimucosum (strain ATCC 700975 / DSM 44827 / CIP 107346 / CN-1) (Corynebacterium nigricans) protein is Small ribosomal subunit protein uS10.